We begin with the raw amino-acid sequence, 102 residues long: Small ribosomal subunit protein uS10 (102 aa).

The interval glutamine 34–lysine 59 is disordered.

This sequence belongs to the universal ribosomal protein uS10 family. As to quaternary structure, part of the 30S ribosomal subunit.

Involved in the binding of tRNA to the ribosomes. The polypeptide is Small ribosomal subunit protein uS10 (Methanopyrus kandleri (strain AV19 / DSM 6324 / JCM 9639 / NBRC 100938)).